The chain runs to 353 residues: Heat-inducible transcription repressor HrcA (353 aa).

This sequence belongs to the HrcA family.

In terms of biological role, negative regulator of class I heat shock genes (grpE-dnaK-dnaJ and groELS operons). Prevents heat-shock induction of these operons. In Synechococcus elongatus (strain ATCC 33912 / PCC 7942 / FACHB-805) (Anacystis nidulans R2), this protein is Heat-inducible transcription repressor HrcA.